The sequence spans 104 residues: Large ribosomal subunit protein uL23 (104 aa).

The protein belongs to the universal ribosomal protein uL23 family. As to quaternary structure, part of the 50S ribosomal subunit. Contacts protein L29, and trigger factor when it is bound to the ribosome.

Its function is as follows. One of the early assembly proteins it binds 23S rRNA. One of the proteins that surrounds the polypeptide exit tunnel on the outside of the ribosome. Forms the main docking site for trigger factor binding to the ribosome. This is Large ribosomal subunit protein uL23 from Cupriavidus metallidurans (strain ATCC 43123 / DSM 2839 / NBRC 102507 / CH34) (Ralstonia metallidurans).